The following is a 358-amino-acid chain: uncharacterized protein (358 aa).

Belongs to the SMP-30/CGR1 family.

This is an uncharacterized protein from Saccharomyces cerevisiae (strain ATCC 204508 / S288c) (Baker's yeast).